A 336-amino-acid chain; its full sequence is Phospho-N-acetylmuramoyl-pentapeptide-transferase (336 aa).

A run of 10 helical transmembrane segments spans residues 3–23 (LSIM…PRFI), 52–72 (MGGT…SIIL), 79–99 (NLGA…IGFL), 123–143 (LIAG…SAIN), 144–164 (IFGF…FWVV), 175–195 (GIDG…GIIA), 201–221 (FDIL…FVFN), 227–247 (VFMG…ISIA), 255–275 (LFIG…VAYF), and 315–335 (VDAF…AILY).

This sequence belongs to the glycosyltransferase 4 family. MraY subfamily. Requires Mg(2+) as cofactor.

Its subcellular location is the cell membrane. The enzyme catalyses UDP-N-acetyl-alpha-D-muramoyl-L-alanyl-gamma-D-glutamyl-L-lysyl-D-alanyl-D-alanine + di-trans,octa-cis-undecaprenyl phosphate = Mur2Ac(oyl-L-Ala-gamma-D-Glu-L-Lys-D-Ala-D-Ala)-di-trans,octa-cis-undecaprenyl diphosphate + UMP. The protein operates within cell wall biogenesis; peptidoglycan biosynthesis. Functionally, catalyzes the initial step of the lipid cycle reactions in the biosynthesis of the cell wall peptidoglycan: transfers peptidoglycan precursor phospho-MurNAc-pentapeptide from UDP-MurNAc-pentapeptide onto the lipid carrier undecaprenyl phosphate, yielding undecaprenyl-pyrophosphoryl-MurNAc-pentapeptide, known as lipid I. This Streptococcus agalactiae serotype Ia (strain ATCC 27591 / A909 / CDC SS700) protein is Phospho-N-acetylmuramoyl-pentapeptide-transferase.